We begin with the raw amino-acid sequence, 632 residues long: tRNA uridine 5-carboxymethylaminomethyl modification enzyme MnmG (632 aa).

FAD is bound at residue 13-18 (GGGHAG). 274-288 (GPRYCPSIEDKVMRF) is a binding site for NAD(+).

Belongs to the MnmG family. In terms of assembly, homodimer. Heterotetramer of two MnmE and two MnmG subunits. FAD serves as cofactor.

Its subcellular location is the cytoplasm. Its function is as follows. NAD-binding protein involved in the addition of a carboxymethylaminomethyl (cmnm) group at the wobble position (U34) of certain tRNAs, forming tRNA-cmnm(5)s(2)U34. This chain is tRNA uridine 5-carboxymethylaminomethyl modification enzyme MnmG, found in Dichelobacter nodosus (strain VCS1703A).